Here is an 842-residue protein sequence, read N- to C-terminus: Translation initiation factor IF-2 (842 aa).

Residues 94–259 (QRSPEEIQAE…HGFQNPTGPV (166 aa)) form a disordered region. Residues 96 to 138 (SPEEIQAEQKRELDERRAAENAARDKVEAEVRQRNEEQARRQA) are compositionally biased toward basic and acidic residues. Residues 139 to 148 (ADSAVAAPAP) are compositionally biased toward low complexity. The span at 149 to 159 (AAKPEPAPAAA) shows a compositional bias: pro residues. The span at 160–172 (PAPVVADAPASED) shows a compositional bias: low complexity. 2 stretches are compositionally biased toward basic and acidic residues: residues 173–202 (AAARAAERKKDETRRNESRTRDDDRRRGEA) and 226–235 (TTDEESDGAR). A compositionally biased stretch (basic residues) spans 236–249 (RGRGGKGKLKKRNQ). Residues 342–509 (SRAPVVTVMG…AVLLQAEILE (168 aa)) form the tr-type G domain. Positions 351-358 (GHVDHGKT) are G1. Residue 351 to 358 (GHVDHGKT) participates in GTP binding. Positions 376–380 (GITQH) are G2. A G3 region spans residues 397–400 (DTPG). Residues 397–401 (DTPGH) and 451–454 (NKID) contribute to the GTP site. Residues 451–454 (NKID) are G4. The segment at 487–489 (SAK) is G5.

This sequence belongs to the TRAFAC class translation factor GTPase superfamily. Classic translation factor GTPase family. IF-2 subfamily.

The protein resides in the cytoplasm. Its function is as follows. One of the essential components for the initiation of protein synthesis. Protects formylmethionyl-tRNA from spontaneous hydrolysis and promotes its binding to the 30S ribosomal subunits. Also involved in the hydrolysis of GTP during the formation of the 70S ribosomal complex. The sequence is that of Translation initiation factor IF-2 from Pseudomonas putida (strain GB-1).